A 381-amino-acid chain; its full sequence is Erythronate-4-phosphate dehydrogenase (381 aa).

Positions 45 and 66 each coordinate substrate. 2 residues coordinate NAD(+): Asp146 and Thr173. Arg206 is an active-site residue. Asp230 is a binding site for NAD(+). Glu235 is a catalytic residue. His252 acts as the Proton donor in catalysis. Gly255 lines the NAD(+) pocket. Tyr256 contributes to the substrate binding site.

The protein belongs to the D-isomer specific 2-hydroxyacid dehydrogenase family. PdxB subfamily. Homodimer.

It localises to the cytoplasm. It catalyses the reaction 4-phospho-D-erythronate + NAD(+) = (R)-3-hydroxy-2-oxo-4-phosphooxybutanoate + NADH + H(+). It participates in cofactor biosynthesis; pyridoxine 5'-phosphate biosynthesis; pyridoxine 5'-phosphate from D-erythrose 4-phosphate: step 2/5. Functionally, catalyzes the oxidation of erythronate-4-phosphate to 3-hydroxy-2-oxo-4-phosphonooxybutanoate. This chain is Erythronate-4-phosphate dehydrogenase, found in Hahella chejuensis (strain KCTC 2396).